A 489-amino-acid polypeptide reads, in one-letter code: Phosphoglucosamine mutase (489 aa).

S136 acts as the Phosphoserine intermediate in catalysis. The Mg(2+) site is built by S136, D275, D277, and D279. S136 is subject to Phosphoserine.

Belongs to the phosphohexose mutase family. The cofactor is Mg(2+). Activated by phosphorylation.

The catalysed reaction is alpha-D-glucosamine 1-phosphate = D-glucosamine 6-phosphate. Its function is as follows. Catalyzes the conversion of glucosamine-6-phosphate to glucosamine-1-phosphate. This chain is Phosphoglucosamine mutase, found in Trichodesmium erythraeum (strain IMS101).